We begin with the raw amino-acid sequence, 112 residues long: Putative pterin-4-alpha-carbinolamine dehydratase (112 aa).

The protein belongs to the pterin-4-alpha-carbinolamine dehydratase family.

It catalyses the reaction (4aS,6R)-4a-hydroxy-L-erythro-5,6,7,8-tetrahydrobiopterin = (6R)-L-erythro-6,7-dihydrobiopterin + H2O. The chain is Putative pterin-4-alpha-carbinolamine dehydratase from Photobacterium profundum (strain SS9).